The sequence spans 66 residues: Phylloseptin-B1 (66 aa).

Residues 1-22 form the signal peptide; it reads MAFLKKSLFLVLFLGLVSLSIC. Positions 23-46 are excised as a propeptide; it reads EEEKRETEEKEYDQGEDDKSEEKR. Position 65 is a leucine amide (Leu-65).

Belongs to the frog skin active peptide (FSAP) family. Phylloseptin subfamily. In terms of tissue distribution, expressed by the skin glands.

The protein resides in the secreted. It is found in the target cell membrane. Antimicrobial peptide with activity against only a few strains of Gram-positive bacteria (S.aureus and B.megaterium). Acts in a synergistic effect in combination with Plasticin-B1 at doses that are not active alone. This Phyllomedusa bicolor (Two-colored leaf frog) protein is Phylloseptin-B1.